The chain runs to 351 residues: Methylthioribose-1-phosphate isomerase (351 aa).

Residues 51-53 (RGA), Arg-94, and Gln-199 each bind substrate. Asp-240 functions as the Proton donor in the catalytic mechanism. 250–251 (NK) contributes to the substrate binding site.

The protein belongs to the eIF-2B alpha/beta/delta subunits family. MtnA subfamily. Homodimer.

The enzyme catalyses 5-(methylsulfanyl)-alpha-D-ribose 1-phosphate = 5-(methylsulfanyl)-D-ribulose 1-phosphate. It functions in the pathway amino-acid biosynthesis; L-methionine biosynthesis via salvage pathway; L-methionine from S-methyl-5-thio-alpha-D-ribose 1-phosphate: step 1/6. Its function is as follows. Catalyzes the interconversion of methylthioribose-1-phosphate (MTR-1-P) into methylthioribulose-1-phosphate (MTRu-1-P). The protein is Methylthioribose-1-phosphate isomerase of Bacillus cereus (strain ATCC 10987 / NRS 248).